The primary structure comprises 222 residues: ATP synthase F(0) complex subunit a (222 aa).

6 helical membrane-spanning segments follow: residues 7 to 27 (AFFDVPVGTMMLAIAFPAILL), 64 to 84 (WSLMLITLTLFIGLTNLLGLL), 93 to 113 (QLTVNLSMAIPLWTGTVVLGF), 132 to 152 (FLIPMIIIIETISLLIRPITL), 160 to 180 (ITAGHLLIHLTGSAALTLLSV), and 197 to 219 (ILELAVALIQAYVFALLISLYLH).

This sequence belongs to the ATPase A chain family. Component of the ATP synthase complex composed at least of ATP5F1A/subunit alpha, ATP5F1B/subunit beta, ATP5MC1/subunit c (homooctomer), MT-ATP6/subunit a, MT-ATP8/subunit 8, ATP5ME/subunit e, ATP5MF/subunit f, ATP5MG/subunit g, ATP5MK/subunit k, ATP5MJ/subunit j, ATP5F1C/subunit gamma, ATP5F1D/subunit delta, ATP5F1E/subunit epsilon, ATP5PF/subunit F6, ATP5PB/subunit b, ATP5PD/subunit d, ATP5PO/subunit OSCP. ATP synthase complex consists of a soluble F(1) head domain (subunits alpha(3) and beta(3)) - the catalytic core - and a membrane F(0) domain - the membrane proton channel (subunits c, a, 8, e, f, g, k and j). These two domains are linked by a central stalk (subunits gamma, delta, and epsilon) rotating inside the F1 region and a stationary peripheral stalk (subunits F6, b, d, and OSCP). Interacts with DNAJC30; interaction is direct.

It localises to the mitochondrion inner membrane. The enzyme catalyses H(+)(in) = H(+)(out). Subunit a, of the mitochondrial membrane ATP synthase complex (F(1)F(0) ATP synthase or Complex V) that produces ATP from ADP in the presence of a proton gradient across the membrane which is generated by electron transport complexes of the respiratory chain. ATP synthase complex consist of a soluble F(1) head domain - the catalytic core - and a membrane F(1) domain - the membrane proton channel. These two domains are linked by a central stalk rotating inside the F(1) region and a stationary peripheral stalk. During catalysis, ATP synthesis in the catalytic domain of F(1) is coupled via a rotary mechanism of the central stalk subunits to proton translocation. With the subunit c (ATP5MC1), forms the proton-conducting channel in the F(0) domain, that contains two crucial half-channels (inlet and outlet) that facilitate proton movement from the mitochondrial intermembrane space (IMS) into the matrix. Protons are taken up via the inlet half-channel and released through the outlet half-channel, following a Grotthuss mechanism. The sequence is that of ATP synthase F(0) complex subunit a from Elephas maximus (Indian elephant).